Consider the following 210-residue polypeptide: RNA chaperone ProQ (210 aa).

2 stretches are compositionally biased toward basic and acidic residues: residues 103–124 and 132–144; these read LKES…EKAK and RKAD…DKPK. A disordered region spans residues 103–148; the sequence is LKESKERVFASRRTNNKEEKAKQPRRPAPRKADAAAKSDKPKAAPK.

This sequence belongs to the ProQ family.

Its subcellular location is the cytoplasm. Functionally, RNA chaperone with significant RNA binding, RNA strand exchange and RNA duplexing activities. The protein is RNA chaperone ProQ of Aeromonas salmonicida (strain A449).